A 412-amino-acid polypeptide reads, in one-letter code: Light-independent protochlorophyllide reductase subunit N (412 aa).

The [4Fe-4S] cluster site is built by cysteine 17, cysteine 42, and cysteine 103.

It belongs to the BchN/ChlN family. Protochlorophyllide reductase is composed of three subunits; ChlL, ChlN and ChlB. Forms a heterotetramer of two ChlB and two ChlN subunits. It depends on [4Fe-4S] cluster as a cofactor.

It catalyses the reaction chlorophyllide a + oxidized 2[4Fe-4S]-[ferredoxin] + 2 ADP + 2 phosphate = protochlorophyllide a + reduced 2[4Fe-4S]-[ferredoxin] + 2 ATP + 2 H2O. It participates in porphyrin-containing compound metabolism; chlorophyll biosynthesis (light-independent). Component of the dark-operative protochlorophyllide reductase (DPOR) that uses Mg-ATP and reduced ferredoxin to reduce ring D of protochlorophyllide (Pchlide) to form chlorophyllide a (Chlide). This reaction is light-independent. The NB-protein (ChlN-ChlB) is the catalytic component of the complex. The chain is Light-independent protochlorophyllide reductase subunit N from Synechococcus sp. (strain CC9902).